A 387-amino-acid chain; its full sequence is 1-deoxy-D-xylulose 5-phosphate reductoisomerase (387 aa).

Thr11, Gly12, Ser13, Ile14, Gly37, Arg38, Gln39, and Asn127 together coordinate NADPH. Lys128 serves as a coordination point for 1-deoxy-D-xylulose 5-phosphate. Residue Glu129 coordinates NADPH. Asp153 provides a ligand contact to Mn(2+). The 1-deoxy-D-xylulose 5-phosphate site is built by Ser154, Glu155, Ser179, and His200. Glu155 provides a ligand contact to Mn(2+). Gly206 lines the NADPH pocket. The 1-deoxy-D-xylulose 5-phosphate site is built by Ser213, Asn218, Lys219, and Glu222. A Mn(2+)-binding site is contributed by Glu222.

It belongs to the DXR family. It depends on Mg(2+) as a cofactor. Mn(2+) serves as cofactor.

It carries out the reaction 2-C-methyl-D-erythritol 4-phosphate + NADP(+) = 1-deoxy-D-xylulose 5-phosphate + NADPH + H(+). It participates in isoprenoid biosynthesis; isopentenyl diphosphate biosynthesis via DXP pathway; isopentenyl diphosphate from 1-deoxy-D-xylulose 5-phosphate: step 1/6. In terms of biological role, catalyzes the NADPH-dependent rearrangement and reduction of 1-deoxy-D-xylulose-5-phosphate (DXP) to 2-C-methyl-D-erythritol 4-phosphate (MEP). The protein is 1-deoxy-D-xylulose 5-phosphate reductoisomerase of Symbiobacterium thermophilum (strain DSM 24528 / JCM 14929 / IAM 14863 / T).